Here is a 593-residue protein sequence, read N- to C-terminus: V-type sodium ATPase catalytic subunit A (593 aa).

232-239 provides a ligand contact to ATP; that stretch reads GPFGAGKT.

Belongs to the ATPase alpha/beta chains family.

The enzyme catalyses 4 Na(+)(in) + ATP + H2O = 4 Na(+)(out) + ADP + phosphate + H(+). In terms of biological role, involved in ATP-driven sodium extrusion. In Enterococcus hirae (strain ATCC 9790 / DSM 20160 / JCM 8729 / LMG 6399 / NBRC 3181 / NCIMB 6459 / NCDO 1258 / NCTC 12367 / WDCM 00089 / R), this protein is V-type sodium ATPase catalytic subunit A (ntpA).